Consider the following 281-residue polypeptide: Ribosomal RNA small subunit methyltransferase A (281 aa).

Residues Asn36, Leu38, Gly63, Glu84, Asp109, and Asn127 each contribute to the S-adenosyl-L-methionine site.

Belongs to the class I-like SAM-binding methyltransferase superfamily. rRNA adenine N(6)-methyltransferase family. RsmA subfamily.

It is found in the cytoplasm. It catalyses the reaction adenosine(1518)/adenosine(1519) in 16S rRNA + 4 S-adenosyl-L-methionine = N(6)-dimethyladenosine(1518)/N(6)-dimethyladenosine(1519) in 16S rRNA + 4 S-adenosyl-L-homocysteine + 4 H(+). Its function is as follows. Specifically dimethylates two adjacent adenosines (A1518 and A1519) in the loop of a conserved hairpin near the 3'-end of 16S rRNA in the 30S particle. May play a critical role in biogenesis of 30S subunits. The chain is Ribosomal RNA small subunit methyltransferase A from Borreliella afzelii (strain PKo) (Borrelia afzelii).